The following is a 211-amino-acid chain: Claudin-7 (211 aa).

Over 1-7 the chain is Cytoplasmic; the sequence is MANSGLQ. A helical transmembrane segment spans residues 8–28; it reads LLGFSMAMLGWVGLIASTAIP. At 29 to 81 the chain is on the extracellular side; sequence QWQMSSYAGDNIITAQAMYKGLWMECVTQSTGMMSCKMYDSVLALPAATQATR. Residues 82 to 102 form a helical membrane-spanning segment; that stretch reads ALMIVSLVLGFLAMFVATMGM. At 103-119 the chain is on the cytoplasmic side; sequence KCTRCGGDDKVKKARIA. A helical membrane pass occupies residues 120 to 140; it reads MTGGIIFIVAGLAALVACSWI. At 141–160 the chain is on the extracellular side; the sequence is GHQIVTDFYNPLTPMNIKYE. A helical transmembrane segment spans residues 161–181; that stretch reads FGPAIFIGWAGSALVLLGGAL. At 182–211 the chain is on the cytoplasmic side; the sequence is LSCSCPGSESKAAYRAPRSYPKSNSSKEYV. Residues 210-211 are interactions with TJP1, TJP2 and TJP3; the sequence is YV.

Belongs to the claudin family. In terms of assembly, directly interacts with TJP1/ZO-1, TJP2/ZO-2 and TJP3/ZO-3. The phosphorylated form interacts with EPCAM. Phosphorylated.

The protein localises to the cell membrane. It is found in the basolateral cell membrane. The protein resides in the cell junction. Its subcellular location is the tight junction. Its function is as follows. Plays a major role in tight junction-specific obliteration of the intercellular space. This is Claudin-7 (Cldn7) from Rattus norvegicus (Rat).